Here is a 305-residue protein sequence, read N- to C-terminus: NAD kinase (305 aa).

Residue Asp88 is the Proton acceptor of the active site. NAD(+)-binding positions include 88-89 (DG), Arg93, 162-163 (NE), Lys173, Asn192, 203-208 (TAYSFS), and Gln262.

The protein belongs to the NAD kinase family. The cofactor is a divalent metal cation.

It localises to the cytoplasm. The enzyme catalyses NAD(+) + ATP = ADP + NADP(+) + H(+). Involved in the regulation of the intracellular balance of NAD and NADP, and is a key enzyme in the biosynthesis of NADP. Catalyzes specifically the phosphorylation on 2'-hydroxyl of the adenosine moiety of NAD to yield NADP. This is NAD kinase from Tropheryma whipplei (strain TW08/27) (Whipple's bacillus).